Here is a 615-residue protein sequence, read N- to C-terminus: Cilia- and flagella-associated protein 52 (615 aa).

WD repeat units follow at residues 54 to 98 (GHSD…LIHR), 101 to 142 (LHKV…AICG), 145 to 184 (CNTN…NKLR), 232 to 275 (GPAK…AGTK), 320 to 359 (AHND…ELLR), 362 to 401 (VPNL…IIFT), 405 to 444 (AHQK…QTLE), 449 to 488 (DHKG…RRTS), 490 to 529 (FANT…AIRI), 533 to 572 (SDLD…CYFV), and 575 to 614 (AHSG…TLAD).

This sequence belongs to the CFAP52 family.

It localises to the cytoplasm. It is found in the cell projection. The protein resides in the cilium. Its subcellular location is the flagellum. May play a role in cell growth and/or survival. The chain is Cilia- and flagella-associated protein 52 from Chlamydomonas reinhardtii (Chlamydomonas smithii).